Reading from the N-terminus, the 395-residue chain is MWGLCKNHFPSNKIQVQERNKALKPKKSGSEHKTKQLFPVFNCKKKEKGVMIRFAILRNANTSLLSARSICLFTQAPTYCHVRLNTLNKSITTKRNSLTESKRHVHDGKHFFTTPHQQQQTKLGEIEEGHSPNIKEEDLRSIGQAITHQRNKRRKQIWSAIFGGIFGVIIGYSLIYKVIYLKEQSFLPLFPSSKIRKLSTRDLKKVDINQVQKLSKLRVLEILSGHDMIKEQYGVPLLDKDGNSPTLNEFSMWCEDQDPCVTGIVMEPDDKRDSSHTWYRIPFVCKWRITHRPISIRGTIDDLLNRIGLETADLFEIISPERVYGSFKYEYPLQGDSHALHLWFHGEIELDDDSLIVYNGKYHVDVKLQEIDLFRREKNGQLVQYVLYKNEAGDK.

The chain crosses the membrane as a helical span at residues 161 to 181 (IFGGIFGVIIGYSLIYKVIYL).

Belongs to the AIM39 family.

The protein resides in the mitochondrion membrane. This chain is Altered inheritance of mitochondria protein 39, mitochondrial (AIM39), found in Saccharomyces cerevisiae (strain YJM789) (Baker's yeast).